A 459-amino-acid polypeptide reads, in one-letter code: MDDTIIALATAVGEGSIHVLRLSGPQAQEIIERAFTPHHPQRWQEKSNFTLHLGYFRAGAKVLDEVLIGRMSAPGSYTGEDVYEINCHGGLYIAERIMRECIGLGARLAEAGEFTKRAFLNGKLDLIQAEAIVDLIAAKTDSSADLALAQMEGLLSQKILLLKDQVMETLAFIEAGIDFPEDDVESLDRDALLQRISKGLELARDLLDGSKTGRILREGMLTVIVGQPNVGKSSLLNALMGEERAIVTDIPGTTRDEIRESVTIGGILLQLVDTAGLRESEDLVEKLGIERSWKAMEKAELILLIIQAGQELKAEELKILSQYDQSVIVLINKMDLLAGKERGEEVLENYPTQQGVWIPFSVKENLGFKQLEKEIKQRVYQGKAEKTKEPLLSNIRQITALERAVSALANGWDSVKNGLPWDMVSIDIRQALQEISQMTGDSVQESLLDDIFSRFCIGK.

(6S)-5-formyl-5,6,7,8-tetrahydrofolate is bound by residues Arg-21, Glu-84, and Lys-123. Residues Gly-219–Tyr-380 form the TrmE-type G domain. Asn-229 serves as a coordination point for K(+). Residues Asn-229 to Ser-234, Thr-248 to Thr-254, and Asp-273 to Gly-276 each bind GTP. Residue Ser-233 participates in Mg(2+) binding. K(+) contacts are provided by Thr-248, Ile-250, and Thr-253. Thr-254 is a Mg(2+) binding site. Position 459 (Lys-459) interacts with (6S)-5-formyl-5,6,7,8-tetrahydrofolate.

It belongs to the TRAFAC class TrmE-Era-EngA-EngB-Septin-like GTPase superfamily. TrmE GTPase family. As to quaternary structure, homodimer. Heterotetramer of two MnmE and two MnmG subunits. It depends on K(+) as a cofactor.

Its subcellular location is the cytoplasm. Exhibits a very high intrinsic GTPase hydrolysis rate. Involved in the addition of a carboxymethylaminomethyl (cmnm) group at the wobble position (U34) of certain tRNAs, forming tRNA-cmnm(5)s(2)U34. The polypeptide is tRNA modification GTPase MnmE (Desulfitobacterium hafniense (strain Y51)).